A 307-amino-acid polypeptide reads, in one-letter code: Methionyl-tRNA formyltransferase (307 aa).

109 to 112 lines the (6S)-5,6,7,8-tetrahydrofolate pocket; the sequence is SLLP.

It belongs to the Fmt family.

The catalysed reaction is L-methionyl-tRNA(fMet) + (6R)-10-formyltetrahydrofolate = N-formyl-L-methionyl-tRNA(fMet) + (6S)-5,6,7,8-tetrahydrofolate + H(+). Attaches a formyl group to the free amino group of methionyl-tRNA(fMet). The formyl group appears to play a dual role in the initiator identity of N-formylmethionyl-tRNA by promoting its recognition by IF2 and preventing the misappropriation of this tRNA by the elongation apparatus. The polypeptide is Methionyl-tRNA formyltransferase (Mycobacteroides abscessus (strain ATCC 19977 / DSM 44196 / CCUG 20993 / CIP 104536 / JCM 13569 / NCTC 13031 / TMC 1543 / L948) (Mycobacterium abscessus)).